We begin with the raw amino-acid sequence, 529 residues long: Cytokinin dehydrogenase 4 (529 aa).

Positions 1–27 (MRGAMKPSIVHCLKLLMLLALGGVTMH) are cleaved as a signal peptide. The 182-residue stretch at 63–244 (CSLLPAAVLH…TRARIALEPA (182 aa)) folds into the FAD-binding PCMH-type domain. Residues Ala99, Gly101, and Gly103 each contribute to the FAD site. His104 carries the post-translational modification Pros-8alpha-FAD histidine. Residues Ser105, Gln109, Asp168, Thr173, Ser179, Val183, and Ile234 each coordinate FAD. N-linked (GlcNAc...) asparagine glycosylation is found at Asn285, Asn419, and Asn425. Tyr479 and Gln517 together coordinate FAD.

It belongs to the oxygen-dependent FAD-linked oxidoreductase family. Monomer. FAD is required as a cofactor. In terms of tissue distribution, expressed in inflorescence meristems.

The protein resides in the secreted. The protein localises to the extracellular space. The catalysed reaction is N(6)-dimethylallyladenine + A + H2O = 3-methyl-2-butenal + adenine + AH2. Functionally, catalyzes the oxidation of cytokinins, a family of N(6)-substituted adenine derivatives that are plant hormones, where the substituent is an isopentenyl group. This Oryza sativa subsp. japonica (Rice) protein is Cytokinin dehydrogenase 4 (CKX4).